The chain runs to 356 residues: 1-deoxy-D-xylulose 5-phosphate reductoisomerase (356 aa).

Residues threonine 7, glycine 8, serine 9, isoleucine 10, glycine 31, asparagine 33, and asparagine 111 each contribute to the NADPH site. Lysine 112 serves as a coordination point for 1-deoxy-D-xylulose 5-phosphate. Position 113 (glutamate 113) interacts with NADPH. Aspartate 131 is a binding site for Mn(2+). 1-deoxy-D-xylulose 5-phosphate contacts are provided by serine 132, glutamate 133, serine 155, and histidine 178. Residue glutamate 133 coordinates Mn(2+). NADPH is bound at residue glycine 184. Positions 191, 196, 197, and 200 each coordinate 1-deoxy-D-xylulose 5-phosphate. Mn(2+) is bound at residue glutamate 200.

This sequence belongs to the DXR family. Requires Mg(2+) as cofactor. Mn(2+) serves as cofactor.

It carries out the reaction 2-C-methyl-D-erythritol 4-phosphate + NADP(+) = 1-deoxy-D-xylulose 5-phosphate + NADPH + H(+). It functions in the pathway isoprenoid biosynthesis; isopentenyl diphosphate biosynthesis via DXP pathway; isopentenyl diphosphate from 1-deoxy-D-xylulose 5-phosphate: step 1/6. Catalyzes the NADPH-dependent rearrangement and reduction of 1-deoxy-D-xylulose-5-phosphate (DXP) to 2-C-methyl-D-erythritol 4-phosphate (MEP). In Campylobacter jejuni subsp. jejuni serotype O:6 (strain 81116 / NCTC 11828), this protein is 1-deoxy-D-xylulose 5-phosphate reductoisomerase.